The primary structure comprises 373 residues: UDP-N-acetylglucosamine--N-acetylmuramyl-(pentapeptide) pyrophosphoryl-undecaprenol N-acetylglucosamine transferase (373 aa).

UDP-N-acetyl-alpha-D-glucosamine contacts are provided by residues 10 to 12 (TGG), N124, R166, S196, and Q301.

This sequence belongs to the glycosyltransferase 28 family. MurG subfamily.

The protein resides in the cell membrane. It catalyses the reaction di-trans,octa-cis-undecaprenyl diphospho-N-acetyl-alpha-D-muramoyl-L-alanyl-D-glutamyl-meso-2,6-diaminopimeloyl-D-alanyl-D-alanine + UDP-N-acetyl-alpha-D-glucosamine = di-trans,octa-cis-undecaprenyl diphospho-[N-acetyl-alpha-D-glucosaminyl-(1-&gt;4)]-N-acetyl-alpha-D-muramoyl-L-alanyl-D-glutamyl-meso-2,6-diaminopimeloyl-D-alanyl-D-alanine + UDP + H(+). The protein operates within cell wall biogenesis; peptidoglycan biosynthesis. Functionally, cell wall formation. Catalyzes the transfer of a GlcNAc subunit on undecaprenyl-pyrophosphoryl-MurNAc-pentapeptide (lipid intermediate I) to form undecaprenyl-pyrophosphoryl-MurNAc-(pentapeptide)GlcNAc (lipid intermediate II). The chain is UDP-N-acetylglucosamine--N-acetylmuramyl-(pentapeptide) pyrophosphoryl-undecaprenol N-acetylglucosamine transferase from Desulforudis audaxviator (strain MP104C).